The sequence spans 338 residues: MYG1 protein YER156C (338 aa).

It belongs to the MYG1 family.

This chain is MYG1 protein YER156C, found in Saccharomyces cerevisiae (strain ATCC 204508 / S288c) (Baker's yeast).